Consider the following 211-residue polypeptide: MADS-box protein AGL72 (211 aa).

Residues 1 to 61 (MVRGKIEIKK…GRLYEFASSD (61 aa)) enclose the MADS-box domain. Residues 88–187 (VQGLKKEMVT…LCQVGERPMG (100 aa)) form the K-box domain.

Its subcellular location is the nucleus. Its function is as follows. MADS-box transcription factor that acts with AGL42 and AGL71 in the control of flowering time. Promotes flowering at the shoot apical and axillary meristems. Seems to act through a gibberellin-dependent pathway. Interacts genetically with SOC1 and its expression is directly regulated by SOC1. This chain is MADS-box protein AGL72 (AGL72), found in Arabidopsis thaliana (Mouse-ear cress).